A 548-amino-acid polypeptide reads, in one-letter code: Membrane protein insertase YidC (548 aa).

The helical transmembrane segment at 6-26 (NLFLIAFLFVSFMIWQAWQTD) threads the bilayer. The tract at residues 30–53 (QPLQTQTTQNTTSAAGDAVNQGVP) is disordered. 4 helical membrane passes run 345-365 (KFLH…TFIV), 420-440 (LGGC…YYML), 458-478 (LAAQ…MFFI), and 499-519 (PVIF…YYIV).

The protein belongs to the OXA1/ALB3/YidC family. Type 1 subfamily. In terms of assembly, interacts with the Sec translocase complex via SecD. Specifically interacts with transmembrane segments of nascent integral membrane proteins during membrane integration.

The protein resides in the cell inner membrane. In terms of biological role, required for the insertion and/or proper folding and/or complex formation of integral membrane proteins into the membrane. Involved in integration of membrane proteins that insert both dependently and independently of the Sec translocase complex, as well as at least some lipoproteins. Aids folding of multispanning membrane proteins. This chain is Membrane protein insertase YidC, found in Erwinia tasmaniensis (strain DSM 17950 / CFBP 7177 / CIP 109463 / NCPPB 4357 / Et1/99).